A 116-amino-acid polypeptide reads, in one-letter code: Iron-sulfur cluster insertion protein ErpA (116 aa).

3 residues coordinate iron-sulfur cluster: Cys-44, Cys-108, and Cys-110.

Belongs to the HesB/IscA family. As to quaternary structure, homodimer. It depends on iron-sulfur cluster as a cofactor.

Its function is as follows. Required for insertion of 4Fe-4S clusters for at least IspG. This chain is Iron-sulfur cluster insertion protein ErpA, found in Shewanella denitrificans (strain OS217 / ATCC BAA-1090 / DSM 15013).